A 213-amino-acid polypeptide reads, in one-letter code: Holliday junction branch migration complex subunit RuvA (213 aa).

The interval 1–64 (MIASVTGEVA…DEAPLLFGFA (64 aa)) is domain I. The tract at residues 65–143 (QGDEKEIFTV…LPEPPVQQAN (79 aa)) is domain II. The interval 144 to 152 (QPQVPVWRD) is flexible linker. Positions 152-213 (DQVVDALTGL…GTTHAPTGRR (62 aa)) are domain III.

Belongs to the RuvA family. In terms of assembly, homotetramer. Forms an RuvA(8)-RuvB(12)-Holliday junction (HJ) complex. HJ DNA is sandwiched between 2 RuvA tetramers; dsDNA enters through RuvA and exits via RuvB. An RuvB hexamer assembles on each DNA strand where it exits the tetramer. Each RuvB hexamer is contacted by two RuvA subunits (via domain III) on 2 adjacent RuvB subunits; this complex drives branch migration. In the full resolvosome a probable DNA-RuvA(4)-RuvB(12)-RuvC(2) complex forms which resolves the HJ.

The protein localises to the cytoplasm. Functionally, the RuvA-RuvB-RuvC complex processes Holliday junction (HJ) DNA during genetic recombination and DNA repair, while the RuvA-RuvB complex plays an important role in the rescue of blocked DNA replication forks via replication fork reversal (RFR). RuvA specifically binds to HJ cruciform DNA, conferring on it an open structure. The RuvB hexamer acts as an ATP-dependent pump, pulling dsDNA into and through the RuvAB complex. HJ branch migration allows RuvC to scan DNA until it finds its consensus sequence, where it cleaves and resolves the cruciform DNA. The sequence is that of Holliday junction branch migration complex subunit RuvA from Kocuria rhizophila (strain ATCC 9341 / DSM 348 / NBRC 103217 / DC2201).